The primary structure comprises 484 residues: Fumarate hydratase class II (484 aa).

Residues 1 to 22 (MPSILDLPIGTGATGKRKESDS) form a disordered region. Substrate is bound by residues 110-112 (SGT), 141-144 (HPND), 151-153 (SSN), and Thr-199. The active-site Proton donor/acceptor is the His-200. Residue Ser-330 is part of the active site. Substrate-binding positions include Ser-331 and 336–338 (KVN).

It belongs to the class-II fumarase/aspartase family. Fumarase subfamily. As to quaternary structure, homotetramer.

The protein localises to the cytoplasm. It catalyses the reaction (S)-malate = fumarate + H2O. Its pathway is carbohydrate metabolism; tricarboxylic acid cycle; (S)-malate from fumarate: step 1/1. Its function is as follows. Involved in the TCA cycle. Catalyzes the stereospecific interconversion of fumarate to L-malate. The protein is Fumarate hydratase class II of Methanosarcina acetivorans (strain ATCC 35395 / DSM 2834 / JCM 12185 / C2A).